Here is a 305-residue protein sequence, read N- to C-terminus: Suppressor of activated egl-4 protein 2 (305 aa).

Residues 138–168 (KRGYESDSSDVSGVSHCSDAKRRRGRPRKDE) are disordered. A DNA-binding region (a.T hook) is located at residues 158 to 170 (KRRRGRPRKDEEA).

Interacts with phosphorylated egl-4. May interact with itself. May be a component of a histone deacetylase complex containing saeg-2, saeg-1 and hda-2. As to expression, ubiquitously expressed.

The protein resides in the nucleus. As a likely component of a histone deacetylase complex, together with saeg-1 and hda-2, functions downstream of the cAMP-dependent kinase egl-4 to regulate the expression of genes required for egg-laying and foraging. This is Suppressor of activated egl-4 protein 2 from Caenorhabditis elegans.